A 456-amino-acid chain; its full sequence is E3 ubiquitin-protein ligase PUB24 (456 aa).

Residues 9-83 (EIPNYFICPI…QHWCVENETR (75 aa)) form the U-box domain.

Auto-ubiquitinated.

The enzyme catalyses S-ubiquitinyl-[E2 ubiquitin-conjugating enzyme]-L-cysteine + [acceptor protein]-L-lysine = [E2 ubiquitin-conjugating enzyme]-L-cysteine + N(6)-ubiquitinyl-[acceptor protein]-L-lysine.. The protein operates within protein modification; protein ubiquitination. Functionally, E3 ubiquitin-protein ligase that acts as a negative regulator of the immunity triggered by the pathogen-associated molecular patterns (PAMPs), in association with PUB22 and PUB23. The protein is E3 ubiquitin-protein ligase PUB24 (PUB24) of Arabidopsis thaliana (Mouse-ear cress).